The sequence spans 542 residues: Nuclear hormone receptor family member nhr-35 (542 aa).

Positions 74–149 form a DNA-binding region, nuclear receptor; that stretch reads NSICHICSDV…SGMRDDQVQS (76 aa). NR C4-type zinc fingers lie at residues 77–97 and 113–137; these read CHICSDVATGRHYGAIACNGC and CRFESKCEIDKHNRAVCRYCRFMKC. The 253-residue stretch at 186 to 438 folds into the NR LBD domain; that stretch reads EYDQLLESLL…VLMEELILAE (253 aa). The segment at 445-487 is disordered; sequence RQDQTPCSIMNDTPSGSQDMCSPCPEDLLRTSTSSNSPTNSSL. Polar residues predominate over residues 448 to 464; it reads QTPCSIMNDTPSGSQDM. Residues 475–487 show a composition bias toward low complexity; that stretch reads TSTSSNSPTNSSL.

It belongs to the nuclear hormone receptor family.

It is found in the nucleus. Functionally, orphan nuclear receptor. The sequence is that of Nuclear hormone receptor family member nhr-35 (nhr-35) from Caenorhabditis elegans.